The sequence spans 328 residues: DNA-directed RNA polymerase subunit alpha (328 aa).

The tract at residues 1–231 (MIYQMQMPAK…EHVAFFADFS (231 aa)) is alpha N-terminal domain (alpha-NTD). The interval 252–328 (MRKLLNTKIE…MDITKYQMKG (77 aa)) is alpha C-terminal domain (alpha-CTD).

This sequence belongs to the RNA polymerase alpha chain family. In terms of assembly, homodimer. The RNAP catalytic core consists of 2 alpha, 1 beta, 1 beta' and 1 omega subunit. When a sigma factor is associated with the core the holoenzyme is formed, which can initiate transcription.

It catalyses the reaction RNA(n) + a ribonucleoside 5'-triphosphate = RNA(n+1) + diphosphate. DNA-dependent RNA polymerase catalyzes the transcription of DNA into RNA using the four ribonucleoside triphosphates as substrates. In Chlorobium phaeovibrioides (strain DSM 265 / 1930) (Prosthecochloris vibrioformis (strain DSM 265)), this protein is DNA-directed RNA polymerase subunit alpha.